Here is a 453-residue protein sequence, read N- to C-terminus: Plasmepsin II (453 aa).

Over 1–37 (MDITVREHDFKHGFIKSNSTFDGLNIDNSKNKKKIQK) the chain is Cytoplasmic. The propeptide occupies 1–124 (MDITVREHDF…SGLTKTNYLG (124 aa)). A helical; Signal-anchor for type II membrane protein membrane pass occupies residues 38-58 (GFQILYVLLFCSVMCGLFYYV). Topologically, residues 59 to 453 (YENVWLQRDN…VGIALAKKNL (395 aa)) are lumenal. In terms of domain architecture, Peptidase A1 spans 140–447 (FYGDAEVGDN…DYDNQSVGIA (308 aa)). Residue aspartate 158 is part of the active site. Cysteines 171 and 176 form a disulfide. Aspartate 338 is an active-site residue. Cysteine 373 and cysteine 409 are joined by a disulfide.

It belongs to the peptidase A1 family. As to quaternary structure, component of the hemozoin formation complex (HFC) composed of falcipains FP2A and/or FP2B, plasmepsins PMII, PMIII/HAP and PMIV, heme detoxifying protein HDP and falcilysin FLN. The HFC complex is involved in hemoglobin degradation and detoxification of heme in the food vacuole during the asexual blood stage. Not N-glycosylated. Post-translationally, proteolytically cleaved into the soluble active mature form in the digestive vacuole by cysteine protease falcipains; the process begins at the early ring stage. Proteolysis requires an acidic environment. In absence of falcipains, autoprocessing may serve as an alternate activation system.

The protein resides in the membrane. It is found in the vacuole lumen. Its subcellular location is the vacuole membrane. The catalysed reaction is Hydrolysis of the bonds linking certain hydrophobic residues in hemoglobin or globin. Also cleaves small molecules substrates such as Ala-Leu-Glu-Arg-Thr-Phe-|-Phe(NO2)-Ser-Phe-Pro-Thr.. Its activity is regulated as follows. Inhibited by pepstatin A. Inhibited by KNI derived compounds (KNI-10742, 10743, 10395, 10333, and 10343). During the asexual blood stage, participates in initial cleavage of native host hemoglobin (Hb) resulting in Hb denaturation. May cleave preferentially denatured hemoglobin that has been cleaved by PMI. Digestion of host Hb is an essential step which provides the parasite with amino acids for protein synthesis, and regulates osmolarity. The polypeptide is Plasmepsin II (Plasmodium falciparum (isolate 3D7)).